Here is a 155-residue protein sequence, read N- to C-terminus: MVKAQGNVVAQNKKARHDYEILETYEAGIVLTGTEIKSVRAARITLKDGFAQVKNGEVWLNNVHITPYEQGNIWNQDPDRTRKLLLKKREIAKLDNELKGTGMTLVPLKVYLKNGFAKVLIGLAKGKHDYDKRESIKRREQDRDIKRQMKQFNGR.

Over residues 132–147 (KRESIKRREQDRDIKR) the composition is skewed to basic and acidic residues. The tract at residues 132-155 (KRESIKRREQDRDIKRQMKQFNGR) is disordered.

This sequence belongs to the SmpB family.

The protein localises to the cytoplasm. Required for rescue of stalled ribosomes mediated by trans-translation. Binds to transfer-messenger RNA (tmRNA), required for stable association of tmRNA with ribosomes. tmRNA and SmpB together mimic tRNA shape, replacing the anticodon stem-loop with SmpB. tmRNA is encoded by the ssrA gene; the 2 termini fold to resemble tRNA(Ala) and it encodes a 'tag peptide', a short internal open reading frame. During trans-translation Ala-aminoacylated tmRNA acts like a tRNA, entering the A-site of stalled ribosomes, displacing the stalled mRNA. The ribosome then switches to translate the ORF on the tmRNA; the nascent peptide is terminated with the 'tag peptide' encoded by the tmRNA and targeted for degradation. The ribosome is freed to recommence translation, which seems to be the essential function of trans-translation. This chain is SsrA-binding protein, found in Streptococcus mutans serotype c (strain ATCC 700610 / UA159).